The primary structure comprises 214 residues: Adenylate kinase (214 aa).

ATP is bound at residue 10 to 15 (GAGKGT). The tract at residues 30 to 59 (STGDMLRAAVKAGTPLGLEAKKVMDAGQLV) is NMP. Residues Thr-31, Arg-36, 57–59 (QLV), 85–88 (GFPR), and Gln-92 contribute to the AMP site. Positions 122–159 (GRRVHPGSGRVYHVVFNPPKVEGKDDVTGEDLAIRPDD) are LID. ATP is bound by residues Arg-123 and 132–133 (VY). Residues Arg-156 and Arg-167 each coordinate AMP. Residue Gln-200 participates in ATP binding.

Belongs to the adenylate kinase family. Monomer.

Its subcellular location is the cytoplasm. It catalyses the reaction AMP + ATP = 2 ADP. Its pathway is purine metabolism; AMP biosynthesis via salvage pathway; AMP from ADP: step 1/1. Its function is as follows. Catalyzes the reversible transfer of the terminal phosphate group between ATP and AMP. Plays an important role in cellular energy homeostasis and in adenine nucleotide metabolism. The sequence is that of Adenylate kinase from Shewanella oneidensis (strain ATCC 700550 / JCM 31522 / CIP 106686 / LMG 19005 / NCIMB 14063 / MR-1).